Consider the following 514-residue polypeptide: MQQLNPSEISEIIKKRIEKLDISSEAKTEGTIVSVSDGIVLIHGLADVMYGEMIEFEGGVYGLALNLERDSVGAVVLGDYKDLAEGQKVRVTGRILEVPVGEQLLGRVVDGLGNPIDGKGALETTLTEPVEKVAPGVIARKSVGQPMQTGYKSVDTMVPIGRGQRELVIGDRQTGKTALAIDAIINQKGTGIKCIYVAIGQKQSSIANVVRKLEEHGAMDHTIVVAAGAADPASMQFLAPYSGCTMGEYFRDRGEDALIIYDDLTKQAWAYRQISLLLRRPPGREAYPGDVFYLHSRLLERASRVNEEYVEKYTNGEVKGKTGSLTALPIIETQAGDVSAFVPTNVISITDGQIFLETSLFNAGIRPAMNAGISVSRVGGAAQTKIMKKLGGGIRLALAQYRELAAFAQFASDLDEATRKQLEHGQRVTELMKQKQFAPMTVAEMGLVLFAANEGFLDDVDAKKVVPFEAALLSYAKSEFGDLLAKINEAGDYNDEIAAGLKSCIEKFKSTQTW.

ATP is bound at residue 170-177 (GDRQTGKT).

The protein belongs to the ATPase alpha/beta chains family. In terms of assembly, F-type ATPases have 2 components, CF(1) - the catalytic core - and CF(0) - the membrane proton channel. CF(1) has five subunits: alpha(3), beta(3), gamma(1), delta(1), epsilon(1). CF(0) has three main subunits: a(1), b(2) and c(9-12). The alpha and beta chains form an alternating ring which encloses part of the gamma chain. CF(1) is attached to CF(0) by a central stalk formed by the gamma and epsilon chains, while a peripheral stalk is formed by the delta and b chains.

It is found in the cell inner membrane. It carries out the reaction ATP + H2O + 4 H(+)(in) = ADP + phosphate + 5 H(+)(out). Its function is as follows. Produces ATP from ADP in the presence of a proton gradient across the membrane. The alpha chain is a regulatory subunit. The protein is ATP synthase subunit alpha 2 of Hahella chejuensis (strain KCTC 2396).